A 503-amino-acid polypeptide reads, in one-letter code: Dihydropyrimidinase (503 aa).

Positions 66, 68, and 158 each coordinate Zn(2+). At Lys158 the chain carries N6-carboxylysine. Position 163 (Tyr163) interacts with substrate. 3 residues coordinate Zn(2+): His191, His247, and Asp325. Asn346 contributes to the substrate binding site.

Belongs to the metallo-dependent hydrolases superfamily. Hydantoinase/dihydropyrimidinase family. Homotetramer. Zn(2+) serves as cofactor. Post-translationally, carboxylation allows a single lysine to coordinate two zinc ions.

The enzyme catalyses 5,6-dihydrouracil + H2O = 3-(carbamoylamino)propanoate + H(+). Its function is as follows. Catalyzes the second step of the reductive pyrimidine degradation, the reversible hydrolytic ring opening of dihydropyrimidines. Can catalyze the ring opening of 5,6-dihydrouracil to N-carbamyl-alanine and of 5,6-dihydrothymine to N-carbamyl-amino isobutyrate. In Dictyostelium discoideum (Social amoeba), this protein is Dihydropyrimidinase (pyd2).